The sequence spans 350 residues: MKDFNINKLVRPNVAGLKPYSSARDEFKTQGAEMVFLDANENPNDNGLNRYPDPQQTSVKEKLSETRGVSPNNILLGNGSDEVLDLIFRAFCEPGKDNVITLPPTYGMYKVLSDINNIENREVLLNHDFEPDLTAIFKQITKDTKIIFLCSPNNPSGNSFEAEKIEMILEKFNGLVVIDEAYIDFSDSKSWIHRLEDFPNLIVTQTFSKAFGRAGIRLGVLYSSDEIIAILNKIKPPYNVNQLTQKESLKILFNLDSIKLQVAEIKNERTILSKQLLEVNFVSKIYRSDANFLLIEVDHANKRYDQFLEKGIVIRNRSNQPLCENCLRITIGTKEENKKLIKAFKELENE.

K209 bears the N6-(pyridoxal phosphate)lysine mark.

The protein belongs to the class-II pyridoxal-phosphate-dependent aminotransferase family. Histidinol-phosphate aminotransferase subfamily. Homodimer. Requires pyridoxal 5'-phosphate as cofactor.

The catalysed reaction is L-histidinol phosphate + 2-oxoglutarate = 3-(imidazol-4-yl)-2-oxopropyl phosphate + L-glutamate. It participates in amino-acid biosynthesis; L-histidine biosynthesis; L-histidine from 5-phospho-alpha-D-ribose 1-diphosphate: step 7/9. In Christiangramia forsetii (strain DSM 17595 / CGMCC 1.15422 / KT0803) (Gramella forsetii), this protein is Histidinol-phosphate aminotransferase.